Consider the following 557-residue polypeptide: Copine-6 (557 aa).

C2 domains are found at residues 1-127 and 134-263; these read MSDP…TKPL and NAGK…MQWD. Ca(2+)-binding residues include Asp167, Asp173, Asp229, Asp231, and Asp237. Positions 244 to 303 are linker region; sequence STFQEMQEGTANPGQEMQWDCINPKYRDKKKHYKSSGTVVLAQCTVEKVHTFLDYIMGGC. The VWFA domain occupies 306–526; it reads SFTVAIDFTA…ALAKCVLAEV (221 aa).

Belongs to the copine family. As to quaternary structure, interacts (via second C2 domain) with OS9 (via C-terminus); this interaction occurs in a calcium-dependent manner in vitro. May interact with NECAB1. The cofactor is Ca(2+).

The protein resides in the cytoplasm. The protein localises to the cell membrane. It is found in the endosome. It localises to the cytoplasmic vesicle. Its subcellular location is the clathrin-coated vesicle. The protein resides in the perikaryon. The protein localises to the cell projection. It is found in the dendrite. Calcium-dependent phospholipid-binding protein that plays a role in calcium-mediated intracellular processes. Binds phospholipid membranes in a calcium-dependent manner. Plays a role in dendrite formation by melanocytes. The sequence is that of Copine-6 from Bos taurus (Bovine).